The chain runs to 54 residues: Large ribosomal subunit protein bL33B (54 aa).

The protein belongs to the bacterial ribosomal protein bL33 family.

The protein is Large ribosomal subunit protein bL33B of Saccharopolyspora erythraea (strain ATCC 11635 / DSM 40517 / JCM 4748 / NBRC 13426 / NCIMB 8594 / NRRL 2338).